A 145-amino-acid polypeptide reads, in one-letter code: uncharacterized protein (145 aa).

2 helical membrane-spanning segments follow: residues 20 to 40 and 116 to 136; these read LIGP…GMFF and MIML…VLSA.

The protein localises to the membrane. This is an uncharacterized protein from Saccharomyces cerevisiae (strain ATCC 204508 / S288c) (Baker's yeast).